The following is a 202-amino-acid chain: Dephospho-CoA kinase (202 aa).

Residues 4–202 enclose the DPCK domain; that stretch reads VIGLTGGIAT…TDKGFINKER (199 aa). 12–17 provides a ligand contact to ATP; that stretch reads ATGKST.

This sequence belongs to the CoaE family.

Its subcellular location is the cytoplasm. The enzyme catalyses 3'-dephospho-CoA + ATP = ADP + CoA + H(+). The protein operates within cofactor biosynthesis; coenzyme A biosynthesis; CoA from (R)-pantothenate: step 5/5. In terms of biological role, catalyzes the phosphorylation of the 3'-hydroxyl group of dephosphocoenzyme A to form coenzyme A. This chain is Dephospho-CoA kinase, found in Staphylococcus haemolyticus (strain JCSC1435).